Reading from the N-terminus, the 424-residue chain is Enolase (424 aa).

Residue Gln-162 participates in (2R)-2-phosphoglycerate binding. Glu-204 functions as the Proton donor in the catalytic mechanism. Mg(2+) is bound by residues Asp-241, Glu-284, and Asp-311. Residues Lys-336, Arg-365, Ser-366, and Lys-387 each coordinate (2R)-2-phosphoglycerate. Lys-336 (proton acceptor) is an active-site residue.

The protein belongs to the enolase family. Requires Mg(2+) as cofactor.

It localises to the cytoplasm. The protein resides in the secreted. The protein localises to the cell surface. It carries out the reaction (2R)-2-phosphoglycerate = phosphoenolpyruvate + H2O. Its pathway is carbohydrate degradation; glycolysis; pyruvate from D-glyceraldehyde 3-phosphate: step 4/5. Its function is as follows. Catalyzes the reversible conversion of 2-phosphoglycerate (2-PG) into phosphoenolpyruvate (PEP). It is essential for the degradation of carbohydrates via glycolysis. In Maricaulis maris (strain MCS10) (Caulobacter maris), this protein is Enolase.